We begin with the raw amino-acid sequence, 225 residues long: Small ribosomal subunit protein uS5 (225 aa).

The S5 DRBM domain maps to 57 to 120 (LEEQVLDVKL…AHAKLSLIKV (64 aa)).

Belongs to the universal ribosomal protein uS5 family. As to quaternary structure, part of the 30S ribosomal subunit. Contacts protein S4.

In terms of biological role, with S4 and S12 plays an important role in translational accuracy. The chain is Small ribosomal subunit protein uS5 from Methanococcus maripaludis (strain DSM 14266 / JCM 13030 / NBRC 101832 / S2 / LL).